The following is a 469-amino-acid chain: Probable acetate kinase (469 aa).

Residue N30 coordinates Mg(2+). K37 is an ATP binding site. R122 is a substrate binding site. The active-site Proton donor/acceptor is the D179. 239 to 243 (HLGSG) serves as a coordination point for ATP. E453 lines the Mg(2+) pocket.

Belongs to the acetokinase family. Mg(2+) is required as a cofactor.

It catalyses the reaction acetate + ATP = acetyl phosphate + ADP. It functions in the pathway metabolic intermediate biosynthesis; acetyl-CoA biosynthesis; acetyl-CoA from acetate: step 1/2. This chain is Probable acetate kinase, found in Neurospora crassa (strain ATCC 24698 / 74-OR23-1A / CBS 708.71 / DSM 1257 / FGSC 987).